The chain runs to 216 residues: ATP-dependent Clp protease proteolytic subunit (216 aa).

The Nucleophile role is filled by serine 101. Residue histidine 126 is part of the active site.

It belongs to the peptidase S14 family. Component of the chloroplastic Clp protease core complex.

Its subcellular location is the plastid. It localises to the chloroplast stroma. The catalysed reaction is Hydrolysis of proteins to small peptides in the presence of ATP and magnesium. alpha-casein is the usual test substrate. In the absence of ATP, only oligopeptides shorter than five residues are hydrolyzed (such as succinyl-Leu-Tyr-|-NHMec, and Leu-Tyr-Leu-|-Tyr-Trp, in which cleavage of the -Tyr-|-Leu- and -Tyr-|-Trp bonds also occurs).. Functionally, cleaves peptides in various proteins in a process that requires ATP hydrolysis. Has a chymotrypsin-like activity. Plays a major role in the degradation of misfolded proteins. The polypeptide is ATP-dependent Clp protease proteolytic subunit (Hordeum vulgare (Barley)).